Consider the following 274-residue polypeptide: 4-hydroxy-tetrahydrodipicolinate reductase (274 aa).

Position 12–17 (12–17 (GAAGRM)) interacts with NAD(+). Arg39 serves as a coordination point for NADP(+). Residues 102–104 (GTT) and 126–129 (SGNM) contribute to the NAD(+) site. His160 (proton donor/acceptor) is an active-site residue. His161 contributes to the (S)-2,3,4,5-tetrahydrodipicolinate binding site. Lys164 functions as the Proton donor in the catalytic mechanism. A (S)-2,3,4,5-tetrahydrodipicolinate-binding site is contributed by 170–171 (GT).

It belongs to the DapB family.

The protein localises to the cytoplasm. The enzyme catalyses (S)-2,3,4,5-tetrahydrodipicolinate + NAD(+) + H2O = (2S,4S)-4-hydroxy-2,3,4,5-tetrahydrodipicolinate + NADH + H(+). The catalysed reaction is (S)-2,3,4,5-tetrahydrodipicolinate + NADP(+) + H2O = (2S,4S)-4-hydroxy-2,3,4,5-tetrahydrodipicolinate + NADPH + H(+). It functions in the pathway amino-acid biosynthesis; L-lysine biosynthesis via DAP pathway; (S)-tetrahydrodipicolinate from L-aspartate: step 4/4. Functionally, catalyzes the conversion of 4-hydroxy-tetrahydrodipicolinate (HTPA) to tetrahydrodipicolinate. The polypeptide is 4-hydroxy-tetrahydrodipicolinate reductase (Rhizobium rhizogenes (strain K84 / ATCC BAA-868) (Agrobacterium radiobacter)).